A 626-amino-acid polypeptide reads, in one-letter code: Beta-galactosidase large subunit (626 aa).

The Proton donor role is filled by Glu-466. Glu-534 functions as the Nucleophile in the catalytic mechanism.

The protein belongs to the glycosyl hydrolase 2 family. As to quaternary structure, heterodimer of a large (LacL) and a small subunit (LacM).

It catalyses the reaction Hydrolysis of terminal non-reducing beta-D-galactose residues in beta-D-galactosides.. In terms of biological role, component of a beta-galactosidase that displays activity with the artificial chromogenic substrate o-nitrophenyl-beta-D-galactopyranoside (ONPG). This Leuconostoc lactis protein is Beta-galactosidase large subunit.